A 141-amino-acid polypeptide reads, in one-letter code: Hydroperoxide reductase (141 aa).

Belongs to the OsmC/Ohr family. Homodimer.

Its subcellular location is the cytoplasm. In terms of biological role, reduces organic and inorganic peroxide substrates. Protects the cell against oxidative stress. This Mycoplasma pneumoniae (strain ATCC 29342 / M129 / Subtype 1) (Mycoplasmoides pneumoniae) protein is Hydroperoxide reductase.